The chain runs to 325 residues: tRNA N6-adenosine threonylcarbamoyltransferase (325 aa).

Fe cation-binding residues include H107, H111, and Y127. Substrate is bound by residues 127–131 (YVSGG), D159, G172, E176, and N257. Residue D285 participates in Fe cation binding.

The protein belongs to the KAE1 / TsaD family. As to quaternary structure, monomer. Component of the KEOPS complex that consists of Kae1, Bud32, Cgi121 and Pcc1; the whole complex dimerizes. Requires Fe(2+) as cofactor.

It localises to the cytoplasm. It catalyses the reaction L-threonylcarbamoyladenylate + adenosine(37) in tRNA = N(6)-L-threonylcarbamoyladenosine(37) in tRNA + AMP + H(+). Its function is as follows. Required for the formation of a threonylcarbamoyl group on adenosine at position 37 (t(6)A37) in tRNAs that read codons beginning with adenine. Is a component of the KEOPS complex that is probably involved in the transfer of the threonylcarbamoyl moiety of threonylcarbamoyl-AMP (TC-AMP) to the N6 group of A37. Kae1 likely plays a direct catalytic role in this reaction, but requires other protein(s) of the complex to fulfill this activity. The sequence is that of tRNA N6-adenosine threonylcarbamoyltransferase from Thermococcus kodakarensis (strain ATCC BAA-918 / JCM 12380 / KOD1) (Pyrococcus kodakaraensis (strain KOD1)).